A 264-amino-acid chain; its full sequence is uncharacterized protein (264 aa).

Disordered regions lie at residues 1-52 (MPRS…AVPG) and 123-207 (GGRW…PWTR). Low complexity predominate over residues 29-40 (AAHPTTSPTAAS). Residues 144 to 154 (HFQSSGAQQES) are compositionally biased toward polar residues. Residues 188-197 (ARKSACKCPR) are compositionally biased toward basic residues.

This is an uncharacterized protein from Homo sapiens (Human).